Reading from the N-terminus, the 222-residue chain is Protein-L-isoaspartate O-methyltransferase (222 aa).

Residue Ser-73 is part of the active site.

This sequence belongs to the methyltransferase superfamily. L-isoaspartyl/D-aspartyl protein methyltransferase family.

The protein resides in the cytoplasm. The enzyme catalyses [protein]-L-isoaspartate + S-adenosyl-L-methionine = [protein]-L-isoaspartate alpha-methyl ester + S-adenosyl-L-homocysteine. In terms of biological role, catalyzes the methyl esterification of L-isoaspartyl residues in peptides and proteins that result from spontaneous decomposition of normal L-aspartyl and L-asparaginyl residues. It plays a role in the repair and/or degradation of damaged proteins. This is Protein-L-isoaspartate O-methyltransferase from Chromobacterium violaceum (strain ATCC 12472 / DSM 30191 / JCM 1249 / CCUG 213 / NBRC 12614 / NCIMB 9131 / NCTC 9757 / MK).